Reading from the N-terminus, the 430-residue chain is tRNA(Ile)-lysidine synthase (430 aa).

Residue 27–32 coordinates ATP; it reads SGGSDS.

The protein belongs to the tRNA(Ile)-lysidine synthase family.

The protein localises to the cytoplasm. The enzyme catalyses cytidine(34) in tRNA(Ile2) + L-lysine + ATP = lysidine(34) in tRNA(Ile2) + AMP + diphosphate + H(+). Ligates lysine onto the cytidine present at position 34 of the AUA codon-specific tRNA(Ile) that contains the anticodon CAU, in an ATP-dependent manner. Cytidine is converted to lysidine, thus changing the amino acid specificity of the tRNA from methionine to isoleucine. This Rickettsia prowazekii (strain Madrid E) protein is tRNA(Ile)-lysidine synthase.